The primary structure comprises 725 residues: A-agglutinin anchorage subunit (725 aa).

Positions 1-24 (MTLSFAHFTYLFTILLGLTNIALA) are cleaved as a signal peptide. Repeat copies occupy residues 53–149 (VSTS…EVGT), 182–188 (TTTSLSS), 189–195 (TSTSPSS), 196–202 (TSTSPSS), 203–209 (TSTSSSS), 210–216 (TSTSSSS), 217–223 (TSTSSSS), 224–230 (TSTSPSS), 231–237 (TSTSSSL), 238–244 (TSTSSSS), 245–251 (TSTSQSS), 252–258 (TSTSSSS), 259–265 (TSTSPSS), 266–272 (TSTSSSS), 273–279 (TSTSPSS), 280–286 (KSTSASS), 287–293 (TSTSSYS), 294–300 (TSTSPSL), and 301–307 (TSSSPTL). A 2 X approximate repeats region spans residues 53–493 (VSTSTIVQAG…TSHSYSSVQT (441 aa)). 2 disordered regions span residues 168 to 318 (PVTS…TSIS) and 335 to 363 (SSTSVSLYSPSTPVYSVPSTSSNVATPSM). An 18 X approximate tandem repeats, Ser/Thr-rich region spans residues 182–307 (TTTSLSSTST…PSLTSSSPTL (126 aa)). Residues 395–493 (MSTYFTTVSG…TSHSYSSVQT (99 aa)) form a 1-2 repeat. Residue Gly-699 is the site of GPI-anchor amidated glycine attachment. A propeptide spans 700–725 (SGSQTRLPLGKLVFAIMAVACNVIFS) (removed in mature form).

Heterodimer; disulfide-linked. Post-translationally, extensively O-glycosylated by PMT1 and PMT2. The GPI-anchor is attached to the protein in the endoplasmic reticulum and serves to target the protein to the cell surface. There, the glucosamine-inositol phospholipid moiety is cleaved off and the GPI-modified mannoprotein is covalently attached via its lipidless GPI glycan remnant to the 1,6-beta-glucan of the outer cell wall layer.

It is found in the secreted. It localises to the cell wall. The protein resides in the membrane. Functionally, cell wall anchoring subunit of the a-agglutinin heterodimer. S.cerevisiae a and alpha cells express the complementary cell surface glycoproteins a-agglutinin and alpha-agglutinin, respectively, which interact with one another to promote cellular aggregation during mating. In Saccharomyces cerevisiae (strain ATCC 204508 / S288c) (Baker's yeast), this protein is A-agglutinin anchorage subunit (AGA1).